Consider the following 252-residue polypeptide: RNA-binding protein 2 (252 aa).

2 disordered regions span residues 1–34 and 232–252; these read MADG…PSGV and RLQF…RGKR. One can recognise an RRM domain in the interval 152–238; it reads STLYVEGLPS…SYLRLQFSRS (87 aa). Residues 242–252 show a composition bias toward gly residues; sequence RSGGPGPRGKR.

In terms of biological role, probable RNA-binding protein. This is RNA-binding protein 2 from Medicago truncatula (Barrel medic).